The chain runs to 364 residues: DNA polymerase IV (364 aa).

Residues 14 to 198 form the UmuC domain; it reads IIHIDMDAFF…LPIEKFHGVG (185 aa). Mg(2+)-binding residues include Asp-18 and Asp-116. The active site involves Glu-117.

The protein belongs to the DNA polymerase type-Y family. In terms of assembly, monomer. It depends on Mg(2+) as a cofactor.

It is found in the cytoplasm. It carries out the reaction DNA(n) + a 2'-deoxyribonucleoside 5'-triphosphate = DNA(n+1) + diphosphate. In terms of biological role, poorly processive, error-prone DNA polymerase involved in untargeted mutagenesis. Copies undamaged DNA at stalled replication forks, which arise in vivo from mismatched or misaligned primer ends. These misaligned primers can be extended by PolIV. Exhibits no 3'-5' exonuclease (proofreading) activity. May be involved in translesional synthesis, in conjunction with the beta clamp from PolIII. The chain is DNA polymerase IV from Streptococcus pyogenes serotype M28 (strain MGAS6180).